A 278-amino-acid polypeptide reads, in one-letter code: Adenosylcobinamide-GDP ribazoletransferase (278 aa).

Transmembrane regions (helical) follow at residues 31–51 (AMAL…SAVF), 66–86 (TLLP…GLHL), 115–135 (TIGA…VGAL), 148–168 (ILVA…GAVP), 187–207 (DAAL…LLDF), 215–237 (ALRA…RYLL), and 247–267 (ILGG…AMTI).

This sequence belongs to the CobS family. Requires Mg(2+) as cofactor.

It is found in the cell membrane. The enzyme catalyses alpha-ribazole + adenosylcob(III)inamide-GDP = adenosylcob(III)alamin + GMP + H(+). The catalysed reaction is alpha-ribazole 5'-phosphate + adenosylcob(III)inamide-GDP = adenosylcob(III)alamin 5'-phosphate + GMP + H(+). It participates in cofactor biosynthesis; adenosylcobalamin biosynthesis; adenosylcobalamin from cob(II)yrinate a,c-diamide: step 7/7. Functionally, joins adenosylcobinamide-GDP and alpha-ribazole to generate adenosylcobalamin (Ado-cobalamin). Also synthesizes adenosylcobalamin 5'-phosphate from adenosylcobinamide-GDP and alpha-ribazole 5'-phosphate. The sequence is that of Adenosylcobinamide-GDP ribazoletransferase from Frankia casuarinae (strain DSM 45818 / CECT 9043 / HFP020203 / CcI3).